Here is a 524-residue protein sequence, read N- to C-terminus: Peptide chain release factor 3 (524 aa).

The tr-type G domain maps to 11 to 278; the sequence is AKRRTFAIIS…SFVQYAPEPG (268 aa). GTP is bound by residues 20–27, 88–92, and 142–145; these read SHPDAGKT, DTPGH, and NKLD.

It belongs to the TRAFAC class translation factor GTPase superfamily. Classic translation factor GTPase family. PrfC subfamily.

The protein localises to the cytoplasm. Increases the formation of ribosomal termination complexes and stimulates activities of RF-1 and RF-2. It binds guanine nucleotides and has strong preference for UGA stop codons. It may interact directly with the ribosome. The stimulation of RF-1 and RF-2 is significantly reduced by GTP and GDP, but not by GMP. The protein is Peptide chain release factor 3 of Lacticaseibacillus casei (strain BL23) (Lactobacillus casei).